The sequence spans 190 residues: CDP-diacylglycerol--glycerol-3-phosphate 3-phosphatidyltransferase (190 aa).

The Cytoplasmic portion of the chain corresponds to 6–17 (GVFNIPMYLTLF). The chain crosses the membrane as a helical span at residues 18–42 (RIIMVPCFVAVFYWPIYWSPMLCTL). The Periplasmic portion of the chain corresponds to 43–65 (IFFIAAITDWFDGFLARRWNQTS). A helical membrane pass occupies residues 66-86 (RIGGFLDPIADKIMIITALIL). Residues 87–91 (ISEHF) lie on the Cytoplasmic side of the membrane. The chain crosses the membrane as a helical span at residues 92–112 (HVWWMTLPISSIIIREILISS). The Periplasmic portion of the chain corresponds to 113–150 (LRECIARVDNKNNISVIWLSKVKTFAQMLALIALLCRL). A helical transmembrane segment spans residues 151–173 (NEWTVIMGVISLYTAMLLTLWSM). Residues 174–186 (CYYVYSVSSILLQ) are Cytoplasmic-facing.

It belongs to the CDP-alcohol phosphatidyltransferase class-I family.

The protein localises to the cell inner membrane. It catalyses the reaction a CDP-1,2-diacyl-sn-glycerol + sn-glycerol 3-phosphate = a 1,2-diacyl-sn-glycero-3-phospho-(1'-sn-glycero-3'-phosphate) + CMP + H(+). It functions in the pathway phospholipid metabolism; phosphatidylglycerol biosynthesis; phosphatidylglycerol from CDP-diacylglycerol: step 1/2. Catalyzes the conversion of cytidine diphosphate diacylglycerol (CDP-DG) and glycerol 3-phosphate into phosphatidylglycerol. Essential for the synthesis of anionic phospholipids, thereby playing a role in balancing the ratio of zwitterionic and anionic phospholipids, which is thought to be important for normal membrane function. In Blochmanniella floridana, this protein is CDP-diacylglycerol--glycerol-3-phosphate 3-phosphatidyltransferase.